A 429-amino-acid chain; its full sequence is Probable imidazolonepropionase (429 aa).

Tyr-161 and His-194 together coordinate 4-imidazolone-5-propanoate. Tyr-161 provides a ligand contact to N-formimidoyl-L-glutamate. His-262 contacts Fe(3+). Residue His-262 participates in Zn(2+) binding. A 4-imidazolone-5-propanoate-binding site is contributed by Glu-265. Asp-336 lines the Fe(3+) pocket. Position 336 (Asp-336) interacts with Zn(2+). An N-formimidoyl-L-glutamate-binding site is contributed by Asn-338.

The protein belongs to the metallo-dependent hydrolases superfamily. HutI family. Requires Zn(2+) as cofactor. Fe(3+) is required as a cofactor.

The enzyme catalyses 4-imidazolone-5-propanoate + H2O = N-formimidoyl-L-glutamate. The protein operates within amino-acid degradation; L-histidine degradation into L-glutamate; N-formimidoyl-L-glutamate from L-histidine: step 3/3. This is Probable imidazolonepropionase (amdhd1) from Nematostella vectensis (Starlet sea anemone).